A 614-amino-acid polypeptide reads, in one-letter code: DNA mismatch repair protein MutL (614 aa).

This sequence belongs to the DNA mismatch repair MutL/HexB family.

Functionally, this protein is involved in the repair of mismatches in DNA. It is required for dam-dependent methyl-directed DNA mismatch repair. May act as a 'molecular matchmaker', a protein that promotes the formation of a stable complex between two or more DNA-binding proteins in an ATP-dependent manner without itself being part of a final effector complex. In Chlorobium phaeovibrioides (strain DSM 265 / 1930) (Prosthecochloris vibrioformis (strain DSM 265)), this protein is DNA mismatch repair protein MutL.